A 255-amino-acid polypeptide reads, in one-letter code: Imidazole glycerol phosphate synthase subunit HisF (255 aa).

Catalysis depends on residues D11 and D130.

Belongs to the HisA/HisF family. In terms of assembly, heterodimer of HisH and HisF.

It is found in the cytoplasm. It carries out the reaction 5-[(5-phospho-1-deoxy-D-ribulos-1-ylimino)methylamino]-1-(5-phospho-beta-D-ribosyl)imidazole-4-carboxamide + L-glutamine = D-erythro-1-(imidazol-4-yl)glycerol 3-phosphate + 5-amino-1-(5-phospho-beta-D-ribosyl)imidazole-4-carboxamide + L-glutamate + H(+). The protein operates within amino-acid biosynthesis; L-histidine biosynthesis; L-histidine from 5-phospho-alpha-D-ribose 1-diphosphate: step 5/9. Functionally, IGPS catalyzes the conversion of PRFAR and glutamine to IGP, AICAR and glutamate. The HisF subunit catalyzes the cyclization activity that produces IGP and AICAR from PRFAR using the ammonia provided by the HisH subunit. This Campylobacter lari (strain RM2100 / D67 / ATCC BAA-1060) protein is Imidazole glycerol phosphate synthase subunit HisF.